We begin with the raw amino-acid sequence, 84 residues long: Small ribosomal subunit protein bS16 (84 aa).

Belongs to the bacterial ribosomal protein bS16 family.

The polypeptide is Small ribosomal subunit protein bS16 (Koribacter versatilis (strain Ellin345)).